A 243-amino-acid polypeptide reads, in one-letter code: HTH-type transcriptional repressor NagR (243 aa).

An HTH gntR-type domain is found at 9–77 (IPIYYQIMEQ…KGRGTFVSKP (69 aa)). The segment at residues 37 to 56 (EREYAEQFGISRMTVRQALS) is a DNA-binding region (H-T-H motif). Alpha-D-glucosamine 6-phosphate-binding positions include 89–90 (FT), 133–135 (RVR), glutamate 145, 165–167 (SIY), glutamate 222, and tyrosine 228. N-acetyl-D-glucosamine 6-phosphate-binding positions include 89 to 90 (FT), 133 to 135 (RVR), glutamate 145, 165 to 167 (SIY), glutamate 222, and tyrosine 228.

Homodimer. Forms dimers via the C-terminal effector-binding domain. At high concentrations, probably forms polymers along the DNA.

Binding to DNA is allosterically inhibited by an effector molecule. Binding of the effector to the C-terminal domain leads to a conformational change that modulates binding to DNA and thereby regulates transcription of the target genes. Glucosamine-6-phosphate (GlcN6P) and/or N-acetylglucosamine-6-phosphate (GlcNAc6P) are putative effectors of NagR. Binding of GlcNAc6P may prevent the protein-protein interactions responsible for polymerization along the DNA, but not the specific DNA binding. Main transcriptional repressor of genes involved in N-acetylglucosamine (GlcNAc) transport and utilization. Represses the expression of the nagAB and nagP operons by binding directly within their upstream regions. Binds to the DNA consensus sequence 5'-ATTGGTATAGACAACT-3'. Also acts as a weak repressor of mapB expression. The polypeptide is HTH-type transcriptional repressor NagR (Bacillus subtilis (strain 168)).